The primary structure comprises 366 residues: Putative amino-acid transporter MJ1196 (366 aa).

The next 11 membrane-spanning stretches (helical) occupy residues 14 to 34, 37 to 57, 87 to 107, 111 to 131, 141 to 161, 173 to 193, 205 to 225, 247 to 267, 291 to 311, 314 to 334, and 346 to 366; these read ITSIVGGGIFVLSPLTYLLFG, IIWGWALLIFVSLIMASPFAY, ILWLSGVFALSGVVSFFEIVF, FNVSYVGLCLIVILTALILGG, IFGILTITIILYIVFSNGIKI, ILTIYFGLWTATGWEGITMPL, GLLVGTFIIGVLYLLFSLTIV, FLLAGMLLIISSCAFSVLFTL, IPYYGVILNTLLVIILLIFDA, LVDMSMFSTLIAYFLLYLAVF, and LISMLITGLLILFRVYNFIIL.

Belongs to the amino acid-polyamine-organocation (APC) superfamily.

It localises to the cell membrane. In Methanocaldococcus jannaschii (strain ATCC 43067 / DSM 2661 / JAL-1 / JCM 10045 / NBRC 100440) (Methanococcus jannaschii), this protein is Putative amino-acid transporter MJ1196.